A 182-amino-acid chain; its full sequence is Phospholipase A2 inhibitor gamma subunit A2 (182 aa).

8 disulfides stabilise this stretch: Cys3-Cys27, Cys6-Cys13, Cys20-Cys48, Cys54-Cys75, Cys76-Cys81, Cys99-Cys124, Cys117-Cys146, and Cys150-Cys172. N-linked (GlcNAc...) asparagine glycosylation is present at Asn157.

Belongs to the CNF-like-inhibitor family. As to quaternary structure, heterodimer of subunit A and subunit B.

It localises to the secreted. Functionally, phospholipase A2 (PA2) inhibitor. Inhibits the enzymatic activity of PA2 of Deinagkistrodon acutus. Also shows a wide anti-hemorrhage activities to D.acutus, Naja atra and Agkistrodon halys venom. The native protein is more potent than the recombinant one. In Trimerodytes annularis (Red-bellied annulate keelback), this protein is Phospholipase A2 inhibitor gamma subunit A2.